The following is a 349-amino-acid chain: L-lactate dehydrogenase (349 aa).

The segment at A199–F219 is disordered.

This sequence belongs to the LDH2/MDH2 oxidoreductase family.

The protein resides in the cytoplasm. The enzyme catalyses (S)-lactate + NAD(+) = pyruvate + NADH + H(+). Its pathway is fermentation; pyruvate fermentation to lactate; (S)-lactate from pyruvate: step 1/1. The sequence is that of L-lactate dehydrogenase (ldh) from Cupriavidus necator (strain ATCC 17699 / DSM 428 / KCTC 22496 / NCIMB 10442 / H16 / Stanier 337) (Ralstonia eutropha).